The chain runs to 251 residues: Esterase mlcF (251 aa).

Catalysis depends on charge relay system residues Ser126, Asp193, and His221.

The protein belongs to the LovG family.

The enzyme catalyses dihydro-ML-236C-[compactin nonaketide synthase] + H2O = holo-[compactin nonaketide synthase] + dihydro-ML-236C carboxylate + H(+). It functions in the pathway polyketide biosynthesis. Functionally, esterase; part of the gene cluster that mediates the biosynthesis of compactin, also known as mevastatin or ML-236B, and which acts as a potent competitive inhibitor of HMG-CoA reductase. Compactin biosynthesis is performed in two stages. The first stage is catalyzed by the nonaketide synthase mlcA, which belongs to type I polyketide synthases and catalyzes the iterative nine-step formation of the polyketide. This PKS stage is completed by the action of dehydrogenase mlcG, which catalyzes the NADPH-dependent reduction of the unsaturated tetra-, penta- and heptaketide intermediates that arise during the mlcA-mediated biosynthesis of the nonaketide chain and leads to dihydro-ML-236C carboxylate. Covalently bound dihydro-ML-236C carboxylate is released from mlcA by the mlcF esterase. Conversion of dihydro-ML-236C carboxylate into ML-236A carboxylate is subsequently performed with the participation of molecular oxygen and P450 monoogygenase mlcC. Finally, mlcH performs the conversion of ML-236A carboxylate to ML-236B/compactin carboxylate through the addition of the side-chain diketide moiety produced by the diketide synthase mlcB. This chain is Esterase mlcF, found in Penicillium citrinum.